The chain runs to 148 residues: Small ribosomal subunit protein bS6 (148 aa).

Residues 96–148 (HEEGQSAMLTRRDDRRERDGDDRPRRREGGFDRGDRGDRGPRRPRDNEAGEGA) form a disordered region.

It belongs to the bacterial ribosomal protein bS6 family.

Functionally, binds together with bS18 to 16S ribosomal RNA. The chain is Small ribosomal subunit protein bS6 from Brucella melitensis biotype 1 (strain ATCC 23456 / CCUG 17765 / NCTC 10094 / 16M).